The sequence spans 866 residues: MSEEVKEVKILEKPWVEKYRPQRLEDIVGQDHIVKRLKHYVKTGSMPHLLFAGPPGVGKCLTGDAKVIANGRLFELGELVEKVSKGRFGPTPVEGLKVLGIDEDGKLREFEVQYVYKDRAERLIKVRTRLGRELKVTPYHPLLVNRKNGEIMWVKAEELRPGDRLAVPRFLPAIAEEDPLAEWLGYFIGDGHADSKNKVITFTNTDPSLRQRFMELTERLFPDAKIRERIHKNRAPDVYVNSRRAWELVSSLGLAGRKADKVYIPEKGWEGIRSFLRAYFDCDAGVDKNAVVLATASREMAEQVTYALAGFGITSKIREKKVRGKTYYHVTISGSENLERFLSEIGFSHREKLERTLKLVKKPNPNLDSLNVNYELISYVRDRLKLNFSDDKRSWSHRKARKISWELMKEIYYRLDELERLKESLSRSILIDWNEMAERRKEIAEKTGIRADRLLEYIKGKRKPSLRNYIKIAKALGIDLEPTINAMRVFARKYSSYAEIGRKLGTWNSSVRIILESNTEKIKELEEIRKIELELIGEILSDEKLKEGVAYLIFLSQNELYWDEITEVKELKGDFVIYDLHVPGYHNFIAGNMPTVVHNTTAALALARELFGENWRHNFLELNASDERGINVIREKVKEFARTKPIGGASFKIIFLDEADALTQDAQQALRRTMEMFSNNVRFILSCNYSSKIIEPIQSRCAIFRFRPLRDEDIAKRIRYIAENEGLELTEEGLQAILYVAEGDLRRAINVLQAAAALDTKITDENVFLVASRARPEDVREMMTLALEGNFLKAREKLRDILLRQGLSGEDVLIQMHKEVFNLPIPEDKKVALADKIGEYNFRLVEGANEMIQLEALLAQFTIMGK.

In terms of domain architecture, DOD-type homing endonuclease spans 183–313 (WLGYFIGDGH…VTYALAGFGI (131 aa)).

It belongs to the activator 1 small subunits family. RfcS subfamily. As to quaternary structure, heteromultimer composed of small subunits (RfcS) and large subunits (RfcL). Post-translationally, this protein undergoes a protein self splicing that involves a post-translational excision of the intervening region (intein) followed by peptide ligation.

Its function is as follows. Part of the RFC clamp loader complex which loads the PCNA sliding clamp onto DNA. This Thermococcus kodakarensis (strain ATCC BAA-918 / JCM 12380 / KOD1) (Pyrococcus kodakaraensis (strain KOD1)) protein is Replication factor C small subunit (rfcS).